A 349-amino-acid chain; its full sequence is tRNA pseudouridine synthase D (349 aa).

Phe27 contacts substrate. Asp80 functions as the Nucleophile in the catalytic mechanism. Asn129 contacts substrate. Residues Gly155–Leu303 enclose the TRUD domain. Residue Phe329 participates in substrate binding.

Belongs to the pseudouridine synthase TruD family.

It carries out the reaction uridine(13) in tRNA = pseudouridine(13) in tRNA. In terms of biological role, responsible for synthesis of pseudouridine from uracil-13 in transfer RNAs. The polypeptide is tRNA pseudouridine synthase D (Escherichia coli O8 (strain IAI1)).